A 117-amino-acid chain; its full sequence is Ribosome-binding factor A (117 aa).

This sequence belongs to the RbfA family. Monomer. Binds 30S ribosomal subunits, but not 50S ribosomal subunits or 70S ribosomes.

The protein resides in the cytoplasm. Functionally, one of several proteins that assist in the late maturation steps of the functional core of the 30S ribosomal subunit. Associates with free 30S ribosomal subunits (but not with 30S subunits that are part of 70S ribosomes or polysomes). Required for efficient processing of 16S rRNA. May interact with the 5'-terminal helix region of 16S rRNA. The polypeptide is Ribosome-binding factor A (Nitrosomonas eutropha (strain DSM 101675 / C91 / Nm57)).